The primary structure comprises 247 residues: MLKATIEADIFRETIDAVSALVNECRLHVDEKGIRTITVDTSNVAMVSLELSASAFLTFAAEPCEIGLDIEKIRSMMSMIGKTDIVSLELDESGKKLKISFGGYEYSITLLDTKTIRKDPNAPNLNLPATFEVPGVMFNDAIKASSMVSDKISLAVSAETCVFTMNADGDSDRIKRELTGDDVHYLTCADARSLFSLDYLKDMGKSIGRAEKVQIRLGTDHPVQFSFVYAGGKGSVGYLLAPRIEAD.

It belongs to the PCNA family. In terms of assembly, homotrimer. The subunits circularize to form a toroid; DNA passes through its center. Replication factor C (RFC) is required to load the toroid on the DNA.

In terms of biological role, sliding clamp subunit that acts as a moving platform for DNA processing. Responsible for tethering the catalytic subunit of DNA polymerase and other proteins to DNA during high-speed replication. This chain is DNA polymerase sliding clamp, found in Methanocorpusculum labreanum (strain ATCC 43576 / DSM 4855 / Z).